A 2227-amino-acid chain; its full sequence is Genome polyprotein (2227 aa).

Short sequence motifs ((L)YPX(n)L motif) lie at residues 167 to 171 (YPHGL) and 200 to 205 (YPVWEL). An involved in P1-2A pentamerization region spans residues 766–836 (MMSRIAAGDL…PRKMKGLFSQ (71 aa)). Residues 1011-1031 (TVEIINTVLCFVKSGILLYVI) traverse the membrane as a helical segment. Positions 1043–1070 (IGLLRVMNYADIGCSVISCGKVFSKMLE) are membrane-penetrating ability. A coiled-coil region spans residues 1127–1152 (KKKDILNILKDNQQKIEKAIEEADNF). The SF3 helicase domain occupies 1204–1366 (HQKLKNLGSI…SFFKNPHNDM (163 aa)). 1230–1237 (GKRGGGKS) is an ATP binding site. The chain crosses the membrane as a helical span at residues 1462-1482 (WVAVGAAVGILGVLVGGWFVY). Residue Y1499 is modified to O-(5'-phospho-RNA)-tyrosine. The Peptidase C3 domain maps to 1514–1728 (DPVESQSTLE…VAKLVTQEMF (215 aa)). Catalysis depends on for protease 3C activity residues H1563, D1603, and C1691. The RdRp catalytic domain occupies 1976–2097 (DVGLDLDFSA…VFSRDVQIDN (122 aa)).

The protein belongs to the picornaviridae polyprotein family. In terms of assembly, homodimer. Homomultimer; probably interacts with membranes in a multimeric form. Seems to assemble into amyloid-like fibers. Homodimer. Monomer. Interacts with protein 3CD. As to quaternary structure, interacts with host ACBD3. In terms of assembly, interacts with protein 3AB. Interacts with human MAVS. As to quaternary structure, homodimer; disulfide-linked. In terms of assembly, homopentamer. Homooligomer. Interacts with capsid protein VP2. Interacts with capsid protein VP3. As to quaternary structure, interacts with capsid protein VP1. Interacts with capsid protein VP3. In terms of assembly, interacts with capsid protein VP1. Interacts with capsid protein VP2. In terms of processing, specific enzymatic cleavages by viral protease in vivo yield a variety of precursors and mature proteins. Polyprotein processing intermediates are produced, such as P1-2A which is a functional precursor of the structural proteins, VP0 which is a VP4-VP2 precursor, VP1-2A precursor, 3ABC precursor which is a stable and catalytically active precursor of 3A, 3B and 3C proteins, 3AB and 3CD precursors. The assembly signal 2A is removed from VP1-2A by a host protease, possibly host Cathepsin L. This cleavage occurs over a region of 3 amino-acids probably generating VP1 proteins with heterogeneous C-termini. During virion maturation, immature virions are rendered infectious following cleavage of VP0 into VP4 and VP2. This maturation seems to be an autocatalytic event triggered by the presence of RNA in the capsid and is followed by a conformational change of the particle. Post-translationally, the assembly signal 2A is removed from VP1-2A by a host protease, possibly host Cathepsin L in naked virions. This cleavage does not occur in enveloped virions. This cleavage occurs over a region of 3 amino-acids probably generating VP1 proteins with heterogeneous C-termini. In terms of processing, VPg is uridylylated prior to priming replication into VPg-pUpU. Unlike other picornaviruses, does not seem to be myristoylated.

It is found in the virion. It localises to the host endosome. Its subcellular location is the host multivesicular body. The protein resides in the host membrane. The protein localises to the host mitochondrion outer membrane. It is found in the host cytoplasm. It localises to the host cytoplasmic vesicle membrane. It catalyses the reaction RNA(n) + a ribonucleoside 5'-triphosphate = RNA(n+1) + diphosphate. The catalysed reaction is a ribonucleoside 5'-triphosphate + H2O = a ribonucleoside 5'-diphosphate + phosphate + H(+). The enzyme catalyses Selective cleavage of Gln-|-Gly bond in the poliovirus polyprotein. In other picornavirus reactions Glu may be substituted for Gln, and Ser or Thr for Gly.. Capsid proteins VP1, VP2, and VP3 form a closed capsid enclosing the viral positive strand RNA genome. All these proteins contain a beta-sheet structure called beta-barrel jelly roll. Together they form an icosahedral capsid (T=3) composed of 60 copies of each VP1, VP2, and VP3, with a diameter of approximately 300 Angstroms. VP1 is situated at the 12 fivefold axes, whereas VP2 and VP3 are located at the quasi-sixfold axes. The naked capsid interacts with the host receptor HAVCR1 to provide virion attachment to and probably entry into the target cell. Its function is as follows. VP0 precursor is a component of the immature procapsids. In terms of biological role, plays a role in the assembly of the 12 pentamers into an icosahedral structure. Has not been detected in mature virions, supposedly owing to its small size. Functionally, precursor component of immature procapsids that corresponds to an extended form of the structural protein VP1. After maturation, possibly by the host Cathepsin L, the assembly signal 2A is cleaved to give rise to the mature VP1 protein. Functions as a viroporin. Affects membrane integrity and causes an increase in membrane permeability. Involved in host intracellular membrane rearrangements probably to give rise to the viral factories. Does not disrupt calcium homeostasis or glycoprotein trafficking. Antagonizes the innate immune response of the host by suppressing IFN-beta synthesis, which it achieves by interfering with the RIG-I/IFIH1 pathway. Its function is as follows. Affects membrane integrity and causes an increase in membrane permeability. In terms of biological role, associates with and induces structural rearrangements of intracellular membranes. Displays RNA-binding activity. Functionally, the precursor 3ABC is targeted to the mitochondrial membrane where protease 3C activity cleaves and inhibits the host antiviral protein MAVS, thereby disrupting activation of IRF3 through the IFIH1/MDA5 pathway. In vivo, the protease activity of 3ABC precursor is more efficient in cleaving the 2BC precursor than that of protein 3C. The 3ABC precursor may therefore play a role in the proteolytic processing of the polyprotein. Possible viroporin. Interacts with the 3CD precursor and with RNA structures found at both the 5'- and 3'-termini of the viral genome. Since the 3AB precursor contains the hydrophobic domain 3A, it probably anchors the whole viral replicase complex to intracellular membranes on which viral RNA synthesis occurs. Its function is as follows. May serve as membrane anchor to the 3AB and 3ABC precursors via its hydrophobic domain. May interact with RNA. In terms of biological role, acts as a primer for viral RNA replication and remains covalently bound to viral genomic RNA. VPg is uridylylated prior to priming replication into VPg-pUpU. The VPg-pUpU is then used as primer on the genomic RNA poly(A) by the RNA-dependent RNA polymerase to replicate the viral genome. Functionally, cysteine protease that generates mature viral proteins from the precursor polyprotein. In addition to its proteolytic activity, it binds to viral RNA, and thus influences viral genome replication. RNA and substrate bind cooperatively to the protease. Cleaves IKBKG/NEMO to impair innate immune signaling. Cleaves host PABPC1 which may participate in the switch of viral translation to RNA synthesis. Interacts with the 3AB precursor and with RNA structures found at both the 5'- and 3'-termini of the viral genome. Disrupts TLR3 signaling by degrading the host adapter protein TICAM1/TRIF. Its function is as follows. RNA-directed RNA polymerase 3D-POL replicates genomic and antigenomic RNA by recognizing replications specific signals. This is Genome polyprotein from Human hepatitis A virus genotype IA (isolate H2) (HHAV).